A 143-amino-acid polypeptide reads, in one-letter code: Large ribosomal subunit protein uL11 (143 aa).

It belongs to the universal ribosomal protein uL11 family. In terms of assembly, part of the ribosomal stalk of the 50S ribosomal subunit. Interacts with L10 and the large rRNA to form the base of the stalk. L10 forms an elongated spine to which L12 dimers bind in a sequential fashion forming a multimeric L10(L12)X complex. One or more lysine residues are methylated.

Functionally, forms part of the ribosomal stalk which helps the ribosome interact with GTP-bound translation factors. In Paracidovorax citrulli (strain AAC00-1) (Acidovorax citrulli), this protein is Large ribosomal subunit protein uL11.